The sequence spans 92 residues: FMRFamide-like neuropeptides 5 (92 aa).

The propeptide occupies M1–A41. Phenylalanine amide occurs at positions 51 and 61. The propeptide occupies S64–V82. Residue F91 is modified to Phenylalanine amide.

This sequence belongs to the FARP (FMRFamide related peptide) family. In terms of tissue distribution, each flp gene is expressed in a distinct set of neurons. Flp-5 is expressed in the ASE sensory neurons, the 14 and M4 cholinergic pharyngeal motoneurons, and the PVT and RMG neurons. It is weakly expressed in the PB and 12 neurons. Also expressed in pharyngeal muscle.

The protein localises to the secreted. In terms of biological role, FMRFamides and FMRFamide-like peptides are neuropeptides. GAKFIRF-amide has an excitatory effect on dissected pharyngeal myogenic muscle system. This chain is FMRFamide-like neuropeptides 5, found in Caenorhabditis elegans.